A 150-amino-acid polypeptide reads, in one-letter code: Protein SprT-like (150 aa).

The SprT-like domain maps to 6 to 147; it reads LQKLTEDISE…CGKCRGKIKR (142 aa). Zn(2+) is bound at residue His67. Glu68 is an active-site residue. His71 contributes to the Zn(2+) binding site.

Belongs to the SprT family. Zn(2+) is required as a cofactor.

It is found in the cytoplasm. This is Protein SprT-like (ydcK) from Bacillus subtilis (strain 168).